The sequence spans 382 residues: Dual-specificity RNA methyltransferase RlmN (382 aa).

The Proton acceptor role is filled by Glu-95. Positions 101 to 348 (EDDRGTLCIS…TTVRKTRGDD (248 aa)) constitute a Radical SAM core domain. Cys-108 and Cys-353 are disulfide-bonded. Positions 115, 119, and 122 each coordinate [4Fe-4S] cluster. S-adenosyl-L-methionine-binding positions include 179–180 (GE), Ser-211, 233–235 (SLH), and Asn-310. The active-site S-methylcysteine intermediate is the Cys-353.

This sequence belongs to the radical SAM superfamily. RlmN family. It depends on [4Fe-4S] cluster as a cofactor.

The protein localises to the cytoplasm. The catalysed reaction is adenosine(2503) in 23S rRNA + 2 reduced [2Fe-2S]-[ferredoxin] + 2 S-adenosyl-L-methionine = 2-methyladenosine(2503) in 23S rRNA + 5'-deoxyadenosine + L-methionine + 2 oxidized [2Fe-2S]-[ferredoxin] + S-adenosyl-L-homocysteine. The enzyme catalyses adenosine(37) in tRNA + 2 reduced [2Fe-2S]-[ferredoxin] + 2 S-adenosyl-L-methionine = 2-methyladenosine(37) in tRNA + 5'-deoxyadenosine + L-methionine + 2 oxidized [2Fe-2S]-[ferredoxin] + S-adenosyl-L-homocysteine. Specifically methylates position 2 of adenine 2503 in 23S rRNA and position 2 of adenine 37 in tRNAs. m2A2503 modification seems to play a crucial role in the proofreading step occurring at the peptidyl transferase center and thus would serve to optimize ribosomal fidelity. This Bordetella pertussis (strain Tohama I / ATCC BAA-589 / NCTC 13251) protein is Dual-specificity RNA methyltransferase RlmN.